A 538-amino-acid chain; its full sequence is Adenine deaminase (538 aa).

It belongs to the metallo-dependent hydrolases superfamily. Adenine deaminase family. Requires Mn(2+) as cofactor.

The catalysed reaction is adenine + H2O + H(+) = hypoxanthine + NH4(+). This is Adenine deaminase from Methanothermobacter thermautotrophicus (strain ATCC 29096 / DSM 1053 / JCM 10044 / NBRC 100330 / Delta H) (Methanobacterium thermoautotrophicum).